We begin with the raw amino-acid sequence, 328 residues long: RNA binding protein fox-1 homolog 3 (328 aa).

Residues Met-1–Thr-30 are compositionally biased toward pro residues. Positions Met-1–Ile-106 are disordered. Residues Thr-49–Leu-87 show a composition bias toward polar residues. The region spanning Lys-99 to Pro-172 is the RRM domain. Arg-192 bears the Asymmetric dimethylarginine; alternate mark. Arg-192 carries the omega-N-methylarginine; alternate modification. Position 288 is an asymmetric dimethylarginine (Arg-288).

The protein resides in the nucleus. It is found in the cytoplasm. Pre-mRNA alternative splicing regulator. Regulates alternative splicing of RBFOX2 to enhance the production of mRNA species that are targeted for nonsense-mediated decay (NMD). This chain is RNA binding protein fox-1 homolog 3 (RBFOX3), found in Bos taurus (Bovine).